The following is a 105-amino-acid chain: Large ribosomal subunit protein uL24 (105 aa).

This sequence belongs to the universal ribosomal protein uL24 family. As to quaternary structure, part of the 50S ribosomal subunit.

One of two assembly initiator proteins, it binds directly to the 5'-end of the 23S rRNA, where it nucleates assembly of the 50S subunit. In terms of biological role, one of the proteins that surrounds the polypeptide exit tunnel on the outside of the subunit. This chain is Large ribosomal subunit protein uL24, found in Acinetobacter baumannii (strain AB307-0294).